The sequence spans 87 residues: Translation initiation factor IF-1 2 (87 aa).

Residues Met-1–Lys-72 form the S1-like domain. Residues Asn-68 to Arg-87 are disordered. The segment covering Pro-77–Arg-87 has biased composition (pro residues).

Belongs to the IF-1 family. In terms of assembly, component of the 30S ribosomal translation pre-initiation complex which assembles on the 30S ribosome in the order IF-2 and IF-3, IF-1 and N-formylmethionyl-tRNA(fMet); mRNA recruitment can occur at any time during PIC assembly.

The protein localises to the cytoplasm. One of the essential components for the initiation of protein synthesis. Stabilizes the binding of IF-2 and IF-3 on the 30S subunit to which N-formylmethionyl-tRNA(fMet) subsequently binds. Helps modulate mRNA selection, yielding the 30S pre-initiation complex (PIC). Upon addition of the 50S ribosomal subunit IF-1, IF-2 and IF-3 are released leaving the mature 70S translation initiation complex. The sequence is that of Translation initiation factor IF-1 2 from Burkholderia cenocepacia (strain HI2424).